A 320-amino-acid polypeptide reads, in one-letter code: Olfactory receptor 2W1 (320 aa).

At M1 to M25 the chain is on the extracellular side. N5 carries N-linked (GlcNAc...) asparagine glycosylation. The helical transmembrane segment at I26–S49 threads the bilayer. Over L50–T57 the chain is Cytoplasmic. Residues P58–P79 traverse the membrane as a helical segment. At Q80 to Q100 the chain is on the extracellular side. C97 and C189 are oxidised to a cystine. A helical membrane pass occupies residues L101–Y120. The Cytoplasmic segment spans residues D121–H139. Residues L140–V158 form a helical membrane-spanning segment. Residues L159–V195 lie on the Extracellular side of the membrane. Residues E196–G219 traverse the membrane as a helical segment. Residues Y220–K236 lie on the Cytoplasmic side of the membrane. Residues A237 to Y259 form a helical membrane-spanning segment. Over L260–K272 the chain is Extracellular. A helical membrane pass occupies residues F273 to L292. Over R293 to S320 the chain is Cytoplasmic.

Belongs to the G-protein coupled receptor 1 family.

The protein resides in the cell membrane. In terms of biological role, odorant receptor. The protein is Olfactory receptor 2W1 (OR2W1) of Homo sapiens (Human).